A 206-amino-acid chain; its full sequence is Large ribosomal subunit protein uL4 (206 aa).

The tract at residues 48-97 (THAVKNRSLVSGGGKKPWKQKHTGRARQGSTRASQWVGGGKAMGPKPRDY) is disordered. Over residues 63–72 (KPWKQKHTGR) the composition is skewed to basic residues.

This sequence belongs to the universal ribosomal protein uL4 family. In terms of assembly, part of the 50S ribosomal subunit.

In terms of biological role, one of the primary rRNA binding proteins, this protein initially binds near the 5'-end of the 23S rRNA. It is important during the early stages of 50S assembly. It makes multiple contacts with different domains of the 23S rRNA in the assembled 50S subunit and ribosome. Functionally, forms part of the polypeptide exit tunnel. This chain is Large ribosomal subunit protein uL4, found in Anaeromyxobacter dehalogenans (strain 2CP-1 / ATCC BAA-258).